Reading from the N-terminus, the 66-residue chain is MFFSQVLRSSARAAPIKRYTGGRIGESWVITEGRRLIPEIFQWSAVLSVCLGWPGAVYFFSKARKA.

A mitochondrion-targeting transit peptide spans 1–8 (MFFSQVLR). The Mitochondrial matrix portion of the chain corresponds to 9 to 27 (SSARAAPIKRYTGGRIGES). Residues 28-64 (WVITEGRRLIPEIFQWSAVLSVCLGWPGAVYFFSKAR) form a helical membrane-spanning segment. Residues 65-66 (KA) lie on the Mitochondrial intermembrane side of the membrane.

Belongs to the fungal cytochrome c oxidase subunit 26 family. Component of the cytochrome c oxidase (complex IV, CIV), a multisubunit enzyme composed of 12 subunits. The complex is composed of a catalytic core of 3 subunits COX1, COX2 and COX3, encoded in the mitochondrial DNA, and 9 supernumerary subunits COX4, COX5A (or COX5B), COX6, COX7, COX8, COX9, COX12, COX13 and COX26, which are encoded in the nuclear genome. The complex exists as a monomer or a dimer and forms supercomplexes (SCs) in the inner mitochondrial membrane with a dimer of ubiquinol-cytochrome c oxidoreductase (cytochrome b-c1 complex, complex III, CIII), resulting in 2 different assemblies (supercomplexes III(2)IV and III(2)IV(2)).

It is found in the mitochondrion inner membrane. Component of the cytochrome c oxidase, the last enzyme in the mitochondrial electron transport chain which drives oxidative phosphorylation. The respiratory chain contains 3 multisubunit complexes succinate dehydrogenase (complex II, CII), ubiquinol-cytochrome c oxidoreductase (cytochrome b-c1 complex, complex III, CIII) and cytochrome c oxidase (complex IV, CIV), that cooperate to transfer electrons derived from NADH and succinate to molecular oxygen, creating an electrochemical gradient over the inner membrane that drives transmembrane transport and the ATP synthase. Cytochrome c oxidase is the component of the respiratory chain that catalyzes the reduction of oxygen to water. Electrons originating from reduced cytochrome c in the intermembrane space (IMS) are transferred via the dinuclear copper A center (CU(A)) of COX2 and heme A of COX1 to the active site in COX1, a binuclear center (BNC) formed by heme A3 and copper B (CU(B)). The BNC reduces molecular oxygen to 2 water molecules using 4 electrons from cytochrome c in the IMS and 4 protons from the mitochondrial matrix. The sequence is that of Cytochrome c oxidase subunit 26, mitochondrial (COX26) from Saccharomyces cerevisiae (strain ATCC 204508 / S288c) (Baker's yeast).